We begin with the raw amino-acid sequence, 245 residues long: 1-acyl-sn-glycerol-3-phosphate acyltransferase (245 aa).

An N-formylmethionine modification is found at Met-1. The HXXXXD motif signature appears at 73–78 (HQNNYD).

This sequence belongs to the 1-acyl-sn-glycerol-3-phosphate acyltransferase family.

The protein resides in the cell inner membrane. The enzyme catalyses a 1-acyl-sn-glycero-3-phosphate + an acyl-CoA = a 1,2-diacyl-sn-glycero-3-phosphate + CoA. It carries out the reaction a fatty acyl-[ACP] + a 1-acyl-sn-glycero-3-phosphate = a 1,2-diacyl-sn-glycero-3-phosphate + holo-[ACP]. The protein operates within phospholipid metabolism; CDP-diacylglycerol biosynthesis; CDP-diacylglycerol from sn-glycerol 3-phosphate: step 2/3. Its function is as follows. Converts lysophosphatidic acid (LPA) into phosphatidic acid by incorporating an acyl moiety at the 2 position. This enzyme can utilize either acyl-CoA or acyl-ACP as the fatty acyl donor. The chain is 1-acyl-sn-glycerol-3-phosphate acyltransferase (plsC) from Escherichia coli (strain K12).